Consider the following 358-residue polypeptide: DNA integrity scanning protein DisA (358 aa).

The DAC domain occupies 9 to 147; sequence KQDLSEILQF…ENMKYILKDI (139 aa). ATP is bound by residues Gly-76, Leu-94, and 107–111; that span reads MRHRT.

Belongs to the DisA family. As to quaternary structure, homooctamer. It depends on Mg(2+) as a cofactor.

The enzyme catalyses 2 ATP = 3',3'-c-di-AMP + 2 diphosphate. Participates in a DNA-damage check-point that is active prior to asymmetric division when DNA is damaged. DisA forms globular foci that rapidly scan along the chromosomes during sporulation, searching for lesions. When a lesion is present, DisA pauses at the lesion site. This triggers a cellular response that culminates in a temporary block in sporulation initiation. In terms of biological role, also has diadenylate cyclase activity, catalyzing the condensation of 2 ATP molecules into cyclic di-AMP (c-di-AMP). c-di-AMP acts as a signaling molecule that couples DNA integrity with progression of sporulation. The rise in c-di-AMP level generated by DisA while scanning the chromosome, operates as a positive signal that advances sporulation; upon encountering a lesion, the DisA focus arrests at the damaged site and halts c-di-AMP synthesis. In Bacillus licheniformis (strain ATCC 14580 / DSM 13 / JCM 2505 / CCUG 7422 / NBRC 12200 / NCIMB 9375 / NCTC 10341 / NRRL NRS-1264 / Gibson 46), this protein is DNA integrity scanning protein DisA.